We begin with the raw amino-acid sequence, 498 residues long: Death-associated inhibitor of apoptosis 2 (498 aa).

BIR repeat units follow at residues 12–77 (RLAT…SMVL), 116–180 (RLVT…PRVQ), and 215–280 (RLRT…QFVL). Zn(2+)-binding residues include cysteine 249, cysteine 252, histidine 269, and cysteine 276. The RING-type zinc finger occupies 451–486 (CKVCLDEEVGVVFLPCGHLATCNQCAPSVANCPMCR).

The protein belongs to the IAP family. In terms of assembly, interacts with the caspase Strica. Interacts (via BIR2 domain) with rpr and grim. Interacts (via the BIR2 and BIR3 domains) with hid. Interacts (via BIR3 domain) with Drice. Interacts with Dredd; likely to bind Dredd simultaneously with Fadd to form a trimeric complex. Post-translationally, caspase-dependent cleavage is required for suppression of Drice-mediated cell death. As to expression, expressed in both principal and stellar cells of the Malphigian tubules.

It localises to the nucleus. It is found in the cytoplasm. Its function is as follows. Required for activation of NF-kappaB transcription factors in the immune deficiency (Imd) signaling cascade which is essential for innate immune responses upon infection by Gram-negative bacteria. Promotes cytoplasmic cleavage of Rel and its translocation to the nucleus where it drives expression of antimicrobial peptides. Binds, polyubiquitinates and activates Dredd which is required for Rel-mediated induction of antimicrobial peptides. Anti-apoptotic protein which binds, ubiquitinates and inactivates the effector caspase Drice. Suppresses rpr and hid-dependent cell death in the eye. However, has also been shown to have little, if any, role in the regulation of the canonical caspase-dependent apoptosis pathway. Plays a role in regulating the expression of ion channels. The polypeptide is Death-associated inhibitor of apoptosis 2 (Diap2) (Drosophila melanogaster (Fruit fly)).